We begin with the raw amino-acid sequence, 324 residues long: Signal peptidase I (324 aa).

Met1 is subject to Blocked amino end (Met). Over 1-3 the chain is Periplasmic; the sequence is MAN. Residues 4–22 form a helical membrane-spanning segment; that stretch reads MFALILVIATLVTGILWCV. Residues 23–58 are Cytoplasmic-facing; sequence DKFFFAPKRRERQAAAQAAAGDSLDKATLKKVAPKP. A helical transmembrane segment spans residues 59–77; the sequence is GWLETGASVFPVLAIVLIV. Over 78–324 the chain is Periplasmic; sequence RSFIYEPFQI…LRLSRIGGIH (247 aa). Catalysis depends on residues Ser91 and Lys146. Cys171 and Cys177 form a disulfide bridge.

The protein belongs to the peptidase S26 family.

It is found in the cell inner membrane. The enzyme catalyses Cleavage of hydrophobic, N-terminal signal or leader sequences from secreted and periplasmic proteins.. The chain is Signal peptidase I (lepB) from Escherichia coli (strain K12).